Reading from the N-terminus, the 339-residue chain is Proto-oncogene serine/threonine-protein kinase mos (339 aa).

The region spanning 61 to 335 (VCLLHRLGSG…LLQKDLKAFR (275 aa)) is the Protein kinase domain. Residues 67–75 (LGSGGFGSV) and Lys88 each bind ATP. Asp196 (proton acceptor) is an active-site residue.

This sequence belongs to the protein kinase superfamily. Ser/Thr protein kinase family. As to quaternary structure, interacts with MAP2K1/MEK1. Expressed mainly in gonadal tissues, and cardiac and skeletal muscles.

Its subcellular location is the cytoplasm. It catalyses the reaction L-seryl-[protein] + ATP = O-phospho-L-seryl-[protein] + ADP + H(+). The enzyme catalyses L-threonyl-[protein] + ATP = O-phospho-L-threonyl-[protein] + ADP + H(+). In terms of biological role, serine/threonine kinase involved in the regulation of MAPK signaling. Is an activator of the ERK1/2 signaling cascade playing an essential role in the stimulation of oocyte maturation. This is Proto-oncogene serine/threonine-protein kinase mos from Rattus norvegicus (Rat).